A 79-amino-acid polypeptide reads, in one-letter code: MKCATLSLVLSMVVLMAEPGDAFFHHIFRGIVHVGKTIHKLVTGGKAEQDQQDQQYQQDQQDQQAQQYQRFNRERAAFD.

Positions 1 to 22 (MKCATLSLVLSMVVLMAEPGDA) are cleaved as a signal peptide. The residue at position 44 (glycine 44) is a Glycine amide. Residues 45–68 (GKAEQDQQDQQYQQDQQDQQAQQY) form a disordered region. A propeptide spanning residues 47–79 (AEQDQQDQQYQQDQQDQQAQQYQRFNRERAAFD) is cleaved from the precursor. Positions 52–68 (QDQQYQQDQQDQQAQQY) are enriched in low complexity.

Expressed in gill, skin, intestine, spleen, anterior kidney, and blood cells.

Its subcellular location is the secreted. In terms of biological role, antimicrobial peptide with broad-spectrum activity against Gram-positive and Gram-negative bacteria as well as against a variety of fungi. Rapidly inactivates both channel catfish herpesvirus (ED(50)=4 uM) and frog virus 3 (ED(50)=13 uM) over a wide temperature range. Seems to disrupt the membranes by adopting an alpha helical conformation. The polypeptide is Moronecidin (Morone chrysops (White bass)).